We begin with the raw amino-acid sequence, 264 residues long: ATP synthase subunit a (264 aa).

The next 6 membrane-spanning stretches (helical) occupy residues 32-52 (IDSLFFSVGLGVLFLWLFHSV), 89-109 (VIAPLALTIFVWVFMMNFMDM), 134-154 (DLNITFSMAIGVFLLIIYYSI), 177-197 (IPVNFLLETVTLIAKPISLAL), 208-228 (LIFILIALMYGANWALSTLGV), and 235-255 (LIFHILVITLQAFIFMMLTIV).

The protein belongs to the ATPase A chain family. F-type ATPases have 2 components, CF(1) - the catalytic core - and CF(0) - the membrane proton channel. CF(1) has five subunits: alpha(3), beta(3), gamma(1), delta(1), epsilon(1). CF(0) has three main subunits: a(1), b(2) and c(9-12). The alpha and beta chains form an alternating ring which encloses part of the gamma chain. CF(1) is attached to CF(0) by a central stalk formed by the gamma and epsilon chains, while a peripheral stalk is formed by the delta and b chains.

It is found in the cell inner membrane. Key component of the proton channel; it plays a direct role in the translocation of protons across the membrane. The sequence is that of ATP synthase subunit a from Shewanella piezotolerans (strain WP3 / JCM 13877).